The following is a 311-amino-acid chain: Transcription factor bHLH145 (311 aa).

In terms of domain architecture, bHLH spans 253–302 (FLKRSKLSSNKIGEEKIFETVSLLRSVVPGEELVDPILVIDRAIDYLKSL).

Homodimer.

It localises to the nucleus. This is Transcription factor bHLH145 (BHLH145) from Arabidopsis thaliana (Mouse-ear cress).